Here is a 378-residue protein sequence, read N- to C-terminus: Acetylornithine deacetylase (378 aa).

Position 76 (His76) interacts with Zn(2+). Asp78 is a catalytic residue. Asp108 serves as a coordination point for Zn(2+). The active site involves Glu140. Glu141, Glu165, and His351 together coordinate Zn(2+).

It belongs to the peptidase M20A family. ArgE subfamily. As to quaternary structure, homodimer. Requires Zn(2+) as cofactor. The cofactor is Co(2+). Glutathione is required as a cofactor.

It is found in the cytoplasm. The enzyme catalyses N(2)-acetyl-L-ornithine + H2O = L-ornithine + acetate. It functions in the pathway amino-acid biosynthesis; L-arginine biosynthesis; L-ornithine from N(2)-acetyl-L-ornithine (linear): step 1/1. Its function is as follows. Catalyzes the hydrolysis of the amide bond of N(2)-acetylated L-amino acids. Cleaves the acetyl group from N-acetyl-L-ornithine to form L-ornithine, an intermediate in L-arginine biosynthesis pathway, and a branchpoint in the synthesis of polyamines. This is Acetylornithine deacetylase from Vibrio parahaemolyticus serotype O3:K6 (strain RIMD 2210633).